A 230-amino-acid chain; its full sequence is Ribonuclease HII (230 aa).

Residues 28–217 (FRIAGIDEAG…VKEHLPSQPD (190 aa)) enclose the RNase H type-2 domain. Residues D34, E35, and D126 each contribute to the a divalent metal cation site. Residues 211–230 (HLPSQPDCDTAGPSTGLFSF) are disordered.

The protein belongs to the RNase HII family. Requires Mn(2+) as cofactor. The cofactor is Mg(2+).

Its subcellular location is the cytoplasm. The catalysed reaction is Endonucleolytic cleavage to 5'-phosphomonoester.. Functionally, endonuclease that specifically degrades the RNA of RNA-DNA hybrids. This Geobacter sp. (strain M21) protein is Ribonuclease HII.